Here is a 143-residue protein sequence, read N- to C-terminus: Insulin-like growth factor 1 (143 aa).

The signal sequence occupies residues 1-32 (MITPTVKMRILSSSHLFYLALCLLTFTSSATA). The b stretch occupies residues 33 to 61 (GPETLCGAELVDALQFVCGDRGFYFNKPT). 3 disulfides stabilise this stretch: Cys-38–Cys-80, Cys-50–Cys-93, and Cys-79–Cys-84. Positions 62 to 73 (GYGSSSRRAPQT) are c. The a stretch occupies residues 74–94 (GIVDECCFRSCDLRRLEMYCA). The segment at 95–102 (PLKPAKAA) is d. The tract at residues 99–143 (AKAARSVRAQRHTDMPKTQKYQPPSTNKKMKSQRRRKGSTFEEHK) is disordered. A propeptide spans 103–143 (RSVRAQRHTDMPKTQKYQPPSTNKKMKSQRRRKGSTFEEHK) (e peptide). Over residues 126–136 (KKMKSQRRRKG) the composition is skewed to basic residues.

Belongs to the insulin family. In terms of assembly, forms a ternary complex with IGFR1 and ITGAV:ITGB3. Forms a ternary complex with IGFR1 and ITGA6:ITGB4. Forms a ternary complex with IGFBP3 and ALS.

The protein resides in the secreted. The insulin-like growth factors, isolated from plasma, are structurally and functionally related to insulin but have a much higher growth-promoting activity. May be a physiological regulator of [1-14C]-2-deoxy-D-glucose (2DG) transport and glycogen synthesis in osteoblasts. Stimulates glucose transport in bone-derived osteoblastic (PyMS) cells and is effective at much lower concentrations than insulin, not only regarding glycogen and DNA synthesis but also with regard to enhancing glucose uptake. May play a role in synapse maturation. Ca(2+)-dependent exocytosis of IGF1 is required for sensory perception of smell in the olfactory bulb. Acts as a ligand for IGF1R. Binds to the alpha subunit of IGF1R, leading to the activation of the intrinsic tyrosine kinase activity which autophosphorylates tyrosine residues in the beta subunit thus initiating a cascade of down-stream signaling events leading to activation of the PI3K-AKT/PKB and the Ras-MAPK pathways. Binds to integrins ITGAV:ITGB3 and ITGA6:ITGB4. Its binding to integrins and subsequent ternary complex formation with integrins and IGFR1 are essential for IGF1 signaling. Induces the phosphorylation and activation of IGFR1, MAPK3/ERK1, MAPK1/ERK2 and AKT1. As part of the MAPK/ERK signaling pathway, acts as a negative regulator of apoptosis in cardiomyocytes via promotion of STUB1/CHIP-mediated ubiquitination and degradation of ICER-type isoforms of CREM. The protein is Insulin-like growth factor 1 of Oryctolagus cuniculus (Rabbit).